A 539-amino-acid chain; its full sequence is O-phosphoserine--tRNA(Cys) ligase (539 aa).

Substrate contacts are provided by residues H188–T190, S233–S235, Y275–Y276, and N319.

This sequence belongs to the class-II aminoacyl-tRNA synthetase family. O-phosphoseryl-tRNA(Cys) synthetase subfamily. As to quaternary structure, homotetramer. Interacts with SepCysS.

It catalyses the reaction tRNA(Cys) + O-phospho-L-serine + ATP = O-phospho-L-seryl-tRNA(Cys) + AMP + diphosphate. Its function is as follows. Catalyzes the attachment of O-phosphoserine (Sep) to tRNA(Cys). The polypeptide is O-phosphoserine--tRNA(Cys) ligase (sepS) (Methanocaldococcus jannaschii (strain ATCC 43067 / DSM 2661 / JAL-1 / JCM 10045 / NBRC 100440) (Methanococcus jannaschii)).